The sequence spans 1241 residues: ATP-dependent helicase/nuclease subunit A (1241 aa).

The 474-residue stretch at 12 to 485 folds into the UvrD-like helicase ATP-binding domain; sequence SQWTDDQWKA…IDLAKNFRSR (474 aa). 33 to 40 lines the ATP pocket; that stretch reads AAAGSGKT. A UvrD-like helicase C-terminal domain is found at 505–805; sequence GEIDYDADAE…RIMTIHKSKG (301 aa).

This sequence belongs to the helicase family. AddA subfamily. As to quaternary structure, heterodimer of AddA and AddB/RexB. It depends on Mg(2+) as a cofactor.

It catalyses the reaction Couples ATP hydrolysis with the unwinding of duplex DNA by translocating in the 3'-5' direction.. The catalysed reaction is ATP + H2O = ADP + phosphate + H(+). Functionally, the heterodimer acts as both an ATP-dependent DNA helicase and an ATP-dependent, dual-direction single-stranded exonuclease. Recognizes the chi site generating a DNA molecule suitable for the initiation of homologous recombination. The AddA nuclease domain is required for chi fragment generation; this subunit has the helicase and 3' -&gt; 5' nuclease activities. This chain is ATP-dependent helicase/nuclease subunit A, found in Bacillus thuringiensis subsp. konkukian (strain 97-27).